The following is a 316-amino-acid chain: Aspartate-semialdehyde dehydrogenase (316 aa).

Residues Thr13–Val16 and Arg41–Ser42 each bind NADP(+). Residue Arg101 coordinates phosphate. The active-site Acyl-thioester intermediate is Cys132. Gln159 contributes to the substrate binding site. An NADP(+)-binding site is contributed by Ser162–Gly163. Residue Lys216 participates in phosphate binding. Arg238 lines the substrate pocket. His245 functions as the Proton acceptor in the catalytic mechanism. Asn316 contacts NADP(+).

The protein belongs to the aspartate-semialdehyde dehydrogenase family. In terms of assembly, homodimer.

The enzyme catalyses L-aspartate 4-semialdehyde + phosphate + NADP(+) = 4-phospho-L-aspartate + NADPH + H(+). It participates in amino-acid biosynthesis; L-lysine biosynthesis via DAP pathway; (S)-tetrahydrodipicolinate from L-aspartate: step 2/4. The protein operates within amino-acid biosynthesis; L-methionine biosynthesis via de novo pathway; L-homoserine from L-aspartate: step 2/3. Its pathway is amino-acid biosynthesis; L-threonine biosynthesis; L-threonine from L-aspartate: step 2/5. Functionally, catalyzes the NADPH-dependent formation of L-aspartate-semialdehyde (L-ASA) by the reductive dephosphorylation of L-aspartyl-4-phosphate. In Vibrio mimicus, this protein is Aspartate-semialdehyde dehydrogenase (asd).